Reading from the N-terminus, the 137-residue chain is Glycine cleavage system H protein (137 aa).

The Lipoyl-binding domain occupies 36-118; sequence PAIIGITEYA…YGEGWLLKVE (83 aa). At Lys-77 the chain carries N6-lipoyllysine.

It belongs to the GcvH family. The glycine cleavage system is composed of four proteins: P, T, L and H. (R)-lipoate is required as a cofactor.

Functionally, the glycine cleavage system catalyzes the degradation of glycine. The H protein shuttles the methylamine group of glycine from the P protein to the T protein. This chain is Glycine cleavage system H protein, found in Bifidobacterium longum (strain NCC 2705).